A 656-amino-acid chain; its full sequence is Pumilio homology domain family member 6 (656 aa).

Residues 1-107 form a disordered region; it reads MAPLTKKTNG…GGENGNHTEQ (107 aa). The segment covering 13 to 23 has biased composition (basic and acidic residues); it reads SAKEVSHSEKK. Phosphoserine; by CK2 occurs at positions 31, 34, and 35. A phosphoserine mark is found at S34 and S35. Residues 52-89 show a composition bias toward acidic residues; it reads SDDDDLDDLSTSDSEAEEEADELDISDDSEEHENENEE. Residues 90–107 are compositionally biased toward basic and acidic residues; it reads KEGKDKSEGGENGNHTEQ. The region spanning 133–483 is the PUM-HD domain; sequence RLRVKTPPLP…ELLSKFAPMF (351 aa). 6 Pumilio repeats span residues 155–191, 192–227, 228–264, 340–376, 377–413, and 415–450; these read ELSKDCISDLVLKHDASRIVQTLVKYSSKDRREQIVD, ALKGKFYVLATSAYGKYLLVKLLHYGSRSSRQTIIN, ELHGSLRKLMRHREGAYVVEDLFVLYATHEQRQQMIK, ELLHEQFAELVHTPEGSDVACTLVARANAKERKLILK, ALKNHAEKLIKNEYGNIVFITILNCVDDTVLVFKTFS, and TVKEHLQEFIIDKFGRRPWLYILLGLDGKYFSPIVK.

It belongs to the PUF6 family. In terms of assembly, component of the ASH1 mRNP composed of at least PUF6, SHE2, SHE3, SHE1 and the ASH1 mRNA. Interacts with SHE2 and FUN12. Phosphorylation by CK2 relieves translational repression activity.

It is found in the bud tip. The protein localises to the nucleus. Its subcellular location is the nucleolus. Functionally, RNA-binding protein involved in post-transcriptional regulation. Component of the ASH1 mRNP which transports the ASH1 mRNA to the distal tip of the bud, where the ASH1 protein is translated and targeted to the daughter cell nucleus. Binds to the ASH1 3'-UTR containing the PUF consensus UUGU segment and represses its translation. This silencing of ASH1 mRNA is critical for asymmetric seggregation of ASH1 to the daughter cell nucleus. This is Pumilio homology domain family member 6 (PUF6) from Saccharomyces cerevisiae (strain ATCC 204508 / S288c) (Baker's yeast).